The sequence spans 312 residues: Olfactory receptor 1D2 (312 aa).

At 1 to 25 (MDGGNQSEGSEFLLLGMSESPEQQR) the chain is on the extracellular side. N5 carries an N-linked (GlcNAc...) asparagine glycan. A helical membrane pass occupies residues 26-49 (ILFWMFLSMYLVTVVGNVLIILAI). The Cytoplasmic portion of the chain corresponds to 50–57 (SSDSRLHT). A helical membrane pass occupies residues 58 to 79 (PVYFFLANLSFTDLFFVTNTIP). At 80–100 (KMLVNLQSHNKAISYAGCLTQ) the chain is on the extracellular side. An intrachain disulfide couples C97 to C189. A helical membrane pass occupies residues 101–120 (LYFLVSLVALDNLILAVMAY). The Cytoplasmic portion of the chain corresponds to 121 to 139 (DRYVAICCPLHYTTAMSPK). Residues 140–158 (LCILLLSLCWVLSVLYGLI) form a helical membrane-spanning segment. Over 159–196 (HTLLMTRVTFCGSRKIHYIFCEMYVLLRMACSNIQINH) the chain is Extracellular. An N-linked (GlcNAc...) asparagine glycan is attached at N195. The helical transmembrane segment at 197–219 (TVLIATGCFIFLIPFGFVIISYV) threads the bilayer. Residues 220-236 (LIIRAILRIPSVSKKYK) lie on the Cytoplasmic side of the membrane. The helical transmembrane segment at 237-259 (AFSTCASHLGAVSLFYGTLCMVY) threads the bilayer. The Extracellular segment spans residues 260–271 (LKPLHTYSVKDS). The helical transmembrane segment at 272–291 (VATVMYAVVTPMMNPFIYSL) threads the bilayer. At 292 to 312 (RNKDMHGALGRLLDKHFKRLT) the chain is on the cytoplasmic side.

It belongs to the G-protein coupled receptor 1 family. As to expression, expressed in testis. Expressed in spermatozoa (at protein level). Expressed in olfactory epithelium.

Its subcellular location is the cell membrane. Functionally, odorant receptor which may be involved in sperm chemotaxis. Bourgeonal is a strong chemoattractant for sperm in vitro and is shown to be a strong agonist for OR1D2 in vitro. May also function in olfactory reception. This chain is Olfactory receptor 1D2 (OR1D2), found in Homo sapiens (Human).